The primary structure comprises 514 residues: Maturase K (514 aa).

The protein belongs to the intron maturase 2 family. MatK subfamily.

It localises to the plastid. Its subcellular location is the chloroplast. Functionally, usually encoded in the trnK tRNA gene intron. Probably assists in splicing its own and other chloroplast group II introns. This is Maturase K from Acer monspessulanum (Montpellier maple).